We begin with the raw amino-acid sequence, 669 residues long: Dymeclin (669 aa).

G2 is lipidated: N-myristoyl glycine.

This sequence belongs to the dymeclin family. Interacts with GOLM1 and PPIB. Post-translationally, myristoylated in vitro; myristoylation is not essential for protein targeting to Golgi compartment.

It is found in the cytoplasm. Its subcellular location is the golgi apparatus. It localises to the membrane. In terms of biological role, necessary for correct organization of Golgi apparatus. Involved in bone development. This is Dymeclin (DYM) from Pongo abelii (Sumatran orangutan).